The sequence spans 292 residues: MPSLKDLRNRIASVKATQKITKAMQMVAAAKLRRAQNAAENARPYAERMAAVLGNLATNLTPGAETPRLLSGTGADRVHLLLVCTAERGLCGAFNSSIARLARDHARRLTAEGRTVKIICVGKKGYDILRREFRDQIVELIELRGVRQLGFDNAETIAQNLLGRFEAGEFDIATLFYSRFRSVIVQIPTAQQIIPAEIPPAGEAAQTDAAYEYEPDEGEILAALLPKNLTVQILRALLENAASEQGARMSAMDNATRNAGEMIKKQTLVYNRTRQAQITKELIEIISGAEAL.

Belongs to the ATPase gamma chain family. F-type ATPases have 2 components, CF(1) - the catalytic core - and CF(0) - the membrane proton channel. CF(1) has five subunits: alpha(3), beta(3), gamma(1), delta(1), epsilon(1). CF(0) has three main subunits: a, b and c.

It localises to the cell inner membrane. Produces ATP from ADP in the presence of a proton gradient across the membrane. The gamma chain is believed to be important in regulating ATPase activity and the flow of protons through the CF(0) complex. The sequence is that of ATP synthase gamma chain from Methylobacterium sp. (strain 4-46).